The following is a 713-amino-acid chain: Protein-glucosylgalactosylhydroxylysine glucosidase (713 aa).

The N-terminal stretch at 1 to 21 is a signal peptide; the sequence is MIINSQEYLQPPQWWNERVEA. N-linked (GlcNAc...) asparagine glycans are attached at residues Asn-104, Asn-160, Asn-171, Asn-186, and Asn-283. Position 317 to 318 (317 to 318) interacts with substrate; that stretch reads WD. Asn-361 carries an N-linked (GlcNAc...) asparagine glycan. Glu-451 functions as the Proton donor in the catalytic mechanism. N-linked (GlcNAc...) asparagine glycosylation is found at Asn-457 and Asn-481. 521–522 lines the substrate pocket; it reads KQ. N-linked (GlcNAc...) asparagine glycosylation is found at Asn-535, Asn-576, and Asn-662.

It belongs to the glycosyl hydrolase 65 family.

The protein resides in the secreted. The catalysed reaction is (5R)-5-O-[alpha-D-glucosyl-(1-&gt;2)-beta-D-galactosyl]-5-hydroxy-L-lysyl-[collagen] + H2O = (5R)-5-O-(beta-D-galactosyl)-5-hydroxy-L-lysyl-[collagen] + D-glucose. In terms of biological role, catalyzes the hydrolysis of glucose from the disaccharide unit linked to hydroxylysine residues of collagen and collagen-like proteins. The protein is Protein-glucosylgalactosylhydroxylysine glucosidase of Dictyostelium discoideum (Social amoeba).